A 131-amino-acid polypeptide reads, in one-letter code: Small ribosomal subunit protein uS8 (131 aa).

The protein belongs to the universal ribosomal protein uS8 family. Part of the 30S ribosomal subunit. Contacts proteins S5 and S12.

One of the primary rRNA binding proteins, it binds directly to 16S rRNA central domain where it helps coordinate assembly of the platform of the 30S subunit. The sequence is that of Small ribosomal subunit protein uS8 from Sorangium cellulosum (strain So ce56) (Polyangium cellulosum (strain So ce56)).